The following is a 473-amino-acid chain: MKTLYSLRRFYHVETLFNGTLALTGRDQETTGFAWWAGNARLINLSGKLLGAHVAHAGLIVFWAGAMNLFEVAHFVPEKPMYEQGLILLPHLATLGWGVGPGGEVIDTFPYFVSGVLHLISSAVLGFGGIYHALLGPETLEESFPFFGYVWKDRNKMTTILGIHLILLGIGAFLLVFKALYFGGIYDTWAPGGGDVRKITNLTLSPSILFGYLLKSPFGGEGWIVSVDDLEDIIGGHVWLGSICILGGIWHILTKPFAWARRALVWSGEAYLSYSLGALSVFGFIACCFVWFNNTAYPSEFYGPTGPEASQAQAFTFLVRDQRLGANVGSAQGPTGLGKYLMRSPTGEVIFGGETMRFWDLRAPWLEPLRGPNGLDLSRLKKDIQPWQERRSAEYMTHAPLGSLNSVGGVATEINAVNYVSPRSWLATSHFVLGFFLFVGHLWHAGRARAAAAGFEKGIDRDFEPVLSMTPLN.

A propeptide spanning residues 1-14 (MKTLYSLRRFYHVE) is cleaved from the precursor. Thr-15 bears the N-acetylthreonine mark. Thr-15 is subject to Phosphothreonine. The next 5 membrane-spanning stretches (helical) occupy residues 69-93 (LFEV…PHLA), 134-155 (LLGP…KDRN), 178-200 (KALY…RKIT), 255-275 (KPFA…LSYS), and 291-312 (WFNN…ASQA). Position 367 (Glu-367) interacts with [CaMn4O5] cluster. The helical transmembrane segment at 447 to 471 (RARAAAAGFEKGIDRDFEPVLSMTP) threads the bilayer.

It belongs to the PsbB/PsbC family. PsbC subfamily. In terms of assembly, PSII is composed of 1 copy each of membrane proteins PsbA, PsbB, PsbC, PsbD, PsbE, PsbF, PsbH, PsbI, PsbJ, PsbK, PsbL, PsbM, PsbT, PsbX, PsbY, PsbZ, Psb30/Ycf12, at least 3 peripheral proteins of the oxygen-evolving complex and a large number of cofactors. It forms dimeric complexes. Binds multiple chlorophylls and provides some of the ligands for the Ca-4Mn-5O cluster of the oxygen-evolving complex. It may also provide a ligand for a Cl- that is required for oxygen evolution. PSII binds additional chlorophylls, carotenoids and specific lipids. is required as a cofactor.

It localises to the plastid. The protein localises to the chloroplast thylakoid membrane. Its function is as follows. One of the components of the core complex of photosystem II (PSII). It binds chlorophyll and helps catalyze the primary light-induced photochemical processes of PSII. PSII is a light-driven water:plastoquinone oxidoreductase, using light energy to abstract electrons from H(2)O, generating O(2) and a proton gradient subsequently used for ATP formation. The sequence is that of Photosystem II CP43 reaction center protein from Phaseolus vulgaris (Kidney bean).